The chain runs to 147 residues: Deoxyuridine 5'-triphosphate nucleotidohydrolase (147 aa).

Residue arginine 24 participates in Mg(2+) binding. Residues 68-70 (PRS), 82-85 (GVID), tyrosine 88, glycine 93, isoleucine 95, and arginine 111 contribute to the dUTP site.

The protein belongs to the dUTPase family.

It catalyses the reaction dUTP + H2O = dUMP + diphosphate + H(+). Functionally, this enzyme is involved in nucleotide metabolism: it produces dUMP, the immediate precursor of thymidine nucleotides and it decreases the intracellular concentration of dUTP so that uracil cannot be incorporated into DNA. This is Deoxyuridine 5'-triphosphate nucleotidohydrolase (OPG046) from Homo sapiens (Human).